A 289-amino-acid polypeptide reads, in one-letter code: MTTSAASWRSDPADPSVASARERALRQRSEGRVRITASAFGGVTRLTDLAEGGALRARLPRGGPGLEAVIVNTAGGVACGDVFSIEAKAGPGAHLTVATPAAEKVYRSDGLCADIQVRLVAEAGARLDWLPQETILFDRARLRRRYEIDLSATASFLSFEALMLGRLAHGDAMGEGHLEDHWRLRRDGALIFADALRLAGPMGALLARPAVAGGNRALATLLYVAPDAEARLEEARALLDAARCEAGASAWNGLLCVRLLAPDIETLRRDATSFLMAFRNAPLPRVWAT.

This sequence belongs to the UreD family. UreD, UreF and UreG form a complex that acts as a GTP-hydrolysis-dependent molecular chaperone, activating the urease apoprotein by helping to assemble the nickel containing metallocenter of UreC. The UreE protein probably delivers the nickel.

It localises to the cytoplasm. In terms of biological role, required for maturation of urease via the functional incorporation of the urease nickel metallocenter. The chain is Urease accessory protein UreD from Xanthobacter autotrophicus (strain ATCC BAA-1158 / Py2).